A 105-amino-acid polypeptide reads, in one-letter code: MFEGFDFSKMGEVLEKAKEQAAALEAESLNKEFGAKSGGGLVSVKANGKGEILDITIDDSLLEDKESLQILLISAINDVLKMAEDDKKAIAGRMLGGLGDFGFKG.

This sequence belongs to the YbaB/EbfC family. As to quaternary structure, homodimer.

It localises to the cytoplasm. Its subcellular location is the nucleoid. Binds to DNA and alters its conformation. May be involved in regulation of gene expression, nucleoid organization and DNA protection. This is Nucleoid-associated protein Ccur92_18190 from Campylobacter curvus (strain 525.92).